A 29-amino-acid polypeptide reads, in one-letter code: Small ribosomal subunit protein uS7 (29 aa).

The interval Glu1–Arg29 is disordered. The segment covering Arg8 to Arg29 has biased composition (basic and acidic residues).

This sequence belongs to the universal ribosomal protein uS7 family. In terms of assembly, part of the 30S ribosomal subunit.

Its function is as follows. One of the primary rRNA binding proteins, it binds directly to 16S rRNA where it nucleates assembly of the head domain of the 30S subunit. Is located at the subunit interface close to the decoding center. In Methanosarcina thermophila, this protein is Small ribosomal subunit protein uS7 (rps7).